Reading from the N-terminus, the 137-residue chain is Small ribosomal subunit protein uS12 (137 aa).

The segment at 1–57 is disordered; that stretch reads MPTINQLVRKPRKSKVEKPKSPALNVGYNSHKKVQTNVSSPQKRGVATRVGTMTPRK. Aspartate 102 is modified (3-methylthioaspartic acid).

It belongs to the universal ribosomal protein uS12 family. As to quaternary structure, part of the 30S ribosomal subunit. Contacts proteins S8 and S17. May interact with IF1 in the 30S initiation complex.

With S4 and S5 plays an important role in translational accuracy. Functionally, interacts with and stabilizes bases of the 16S rRNA that are involved in tRNA selection in the A site and with the mRNA backbone. Located at the interface of the 30S and 50S subunits, it traverses the body of the 30S subunit contacting proteins on the other side and probably holding the rRNA structure together. The combined cluster of proteins S8, S12 and S17 appears to hold together the shoulder and platform of the 30S subunit. This chain is Small ribosomal subunit protein uS12, found in Streptococcus pneumoniae (strain Hungary19A-6).